We begin with the raw amino-acid sequence, 337 residues long: LIX1-like protein (337 aa).

Positions 1–55 (METMRAQRLQPGVGVGGRGTLRALRPGVTGAPTSAATPPVGPPPAPPPPAPPLPP) are disordered. Residues 26-38 (PGVTGAPTSAATP) are compositionally biased toward low complexity. The segment covering 39–55 (PVGPPPAPPPPAPPLPP) has biased composition (pro residues).

This sequence belongs to the LIX1 family.

This chain is LIX1-like protein (Lix1l), found in Mus musculus (Mouse).